The chain runs to 520 residues: 2-isopropylmalate synthase (520 aa).

The Pyruvate carboxyltransferase domain occupies 5-267 (VIIFDTTLRD…HTNINHQEIY (263 aa)). Positions 14, 202, 204, and 238 each coordinate Mn(2+). The regulatory domain stretch occupies residues 392-520 (RLDYFSVQSG…RLQQNNQEMV (129 aa)).

This sequence belongs to the alpha-IPM synthase/homocitrate synthase family. LeuA type 1 subfamily. In terms of assembly, homodimer. Mn(2+) serves as cofactor.

It is found in the cytoplasm. It catalyses the reaction 3-methyl-2-oxobutanoate + acetyl-CoA + H2O = (2S)-2-isopropylmalate + CoA + H(+). Its pathway is amino-acid biosynthesis; L-leucine biosynthesis; L-leucine from 3-methyl-2-oxobutanoate: step 1/4. Catalyzes the condensation of the acetyl group of acetyl-CoA with 3-methyl-2-oxobutanoate (2-ketoisovalerate) to form 3-carboxy-3-hydroxy-4-methylpentanoate (2-isopropylmalate). The polypeptide is 2-isopropylmalate synthase (Yersinia enterocolitica serotype O:8 / biotype 1B (strain NCTC 13174 / 8081)).